A 296-amino-acid polypeptide reads, in one-letter code: L-fucono-1,5-lactonase (296 aa).

Belongs to the metallo-dependent hydrolases superfamily. Monomer. Does not require a divalent metal for activity. The purified enzyme contains Zn(2+), but the addition of chelators does not diminish the catalytic activity of the enzyme, indicating that it does not require a divalent cation for substrate turnover. is required as a cofactor.

It carries out the reaction L-fucono-1,5-lactone + H2O = L-fuconate + H(+). It catalyses the reaction L-fucono-1,4-lactone + H2O = L-fuconate + H(+). The enzyme catalyses D-arabinono-1,4-lactone + H2O = D-arabinonate + H(+). The catalysed reaction is L-xylono-1,4-lactone + H2O = L-xylonate + H(+). It carries out the reaction L-galactono-1,4-lactone + H2O = L-galactonate + H(+). It functions in the pathway carbohydrate degradation; L-fucose degradation. Its function is as follows. L-fucono-1,5-lactonase involved in an L-fucose degradation pathway. Catalyzes the hydrolysis of L-fucono-1,5-lactone to L-fuconate. L-fucono-1,5-lactone is the best substrate, but the enzyme can also hydrolyze L-fucono-1,4-lactone, L-galactono-1,4-lactone D-arabinono-1,4-lactone and L-xylono-1,4-lactone. The polypeptide is L-fucono-1,5-lactonase (Burkholderia multivorans (strain ATCC 17616 / 249)).